A 236-amino-acid polypeptide reads, in one-letter code: Small ribosomal subunit protein uS2c (236 aa).

Belongs to the universal ribosomal protein uS2 family.

The protein resides in the plastid. It localises to the chloroplast. The sequence is that of Small ribosomal subunit protein uS2c (rps2) from Agrostis stolonifera (Creeping bentgrass).